The primary structure comprises 282 residues: Glutamate--LysW ligase ArgX (282 aa).

Residues Lys87, Lys127, Gly131–Val137, and Gln167–Arg178 each bind ATP. The ATP-grasp domain occupies Tyr91–Lys277. Position 192 (Arg192) interacts with substrate. Residue Asn202 coordinates ATP. A substrate-binding site is contributed by Ile203–Ala204. Positions 237, 250, and 252 each coordinate Mg(2+). Glu256–Phe260 contributes to the substrate binding site. Residues Gly259–Phe260 carry the GF motif that is essential for ArgX substrate specificity motif.

The protein belongs to the RimK family. LysX subfamily. Homotetramer. Interacts with LysW. The cofactor is Mg(2+).

It carries out the reaction [amino-group carrier protein]-C-terminal-L-glutamate + L-glutamate + ATP = [amino-group carrier protein]-C-terminal-gamma-(L-glutamyl)-L-glutamate + ADP + phosphate + H(+). It participates in amino-acid biosynthesis; L-arginine biosynthesis. Its function is as follows. Catalyzes the ATP-dependent formation of a covalent bond between the amino group of glutamate and the gamma-carboxyl group of the C-terminal glutamate residue in LysW. The protein is Glutamate--LysW ligase ArgX of Sulfolobus acidocaldarius (strain ATCC 33909 / DSM 639 / JCM 8929 / NBRC 15157 / NCIMB 11770).